The primary structure comprises 374 residues: Chaperone protein DnaJ (374 aa).

The 66-residue stretch at 5–70 folds into the J domain; that stretch reads DYYEVLGVER…SKRAAFDQYG (66 aa). The CR-type zinc finger occupies 133 to 211; it reads GTTVSIRVPT…CHGEGRVEEY (79 aa). Zn(2+)-binding residues include Cys146, Cys149, Cys163, Cys166, Cys185, Cys188, Cys199, and Cys202. 4 CXXCXGXG motif repeats span residues 146–153, 163–170, 185–192, and 199–206; these read CQPCDGSG, CPTCGGIG, CPRCHGQG, and CTSCHGEG.

This sequence belongs to the DnaJ family. Homodimer. Zn(2+) serves as cofactor.

It localises to the cytoplasm. In terms of biological role, participates actively in the response to hyperosmotic and heat shock by preventing the aggregation of stress-denatured proteins and by disaggregating proteins, also in an autonomous, DnaK-independent fashion. Unfolded proteins bind initially to DnaJ; upon interaction with the DnaJ-bound protein, DnaK hydrolyzes its bound ATP, resulting in the formation of a stable complex. GrpE releases ADP from DnaK; ATP binding to DnaK triggers the release of the substrate protein, thus completing the reaction cycle. Several rounds of ATP-dependent interactions between DnaJ, DnaK and GrpE are required for fully efficient folding. Also involved, together with DnaK and GrpE, in the DNA replication of plasmids through activation of initiation proteins. In Pseudomonas putida (strain ATCC 700007 / DSM 6899 / JCM 31910 / BCRC 17059 / LMG 24140 / F1), this protein is Chaperone protein DnaJ.